A 175-amino-acid chain; its full sequence is RNA pyrophosphohydrolase (175 aa).

The Nudix hydrolase domain maps to 6–149 (GYRPNVGIVI…KRDVYRRVMK (144 aa)). Residues 38-59 (GGINPGETPEQAMYRELFEEVG) carry the Nudix box motif.

This sequence belongs to the Nudix hydrolase family. RppH subfamily. It depends on a divalent metal cation as a cofactor.

Accelerates the degradation of transcripts by removing pyrophosphate from the 5'-end of triphosphorylated RNA, leading to a more labile monophosphorylated state that can stimulate subsequent ribonuclease cleavage. This Yersinia pseudotuberculosis serotype O:1b (strain IP 31758) protein is RNA pyrophosphohydrolase.